We begin with the raw amino-acid sequence, 413 residues long: DnaJ protein homolog xdj1 (413 aa).

A J domain is found at 6–73 (KLYDILEVHF…ESREMYDMYG (68 aa)). A CR-type zinc finger spans residues 134-219 (GKEVKLRATR…CKGSGTVPEQ (86 aa)). CXXCXGXG motif repeat units lie at residues 147 to 154 (CPRCQGRG), 164 to 171 (CLSCDGKG), 191 to 198 (CDTCNGKG), and 207 to 214 (CKHCKGSG). C410 is subject to Cysteine methyl ester. C410 is lipidated: S-farnesyl cysteine. The propeptide at 411–413 (QAQ) is removed in mature form.

Its subcellular location is the endoplasmic reticulum membrane. In Schizosaccharomyces pombe (strain 972 / ATCC 24843) (Fission yeast), this protein is DnaJ protein homolog xdj1 (xdj1).